Here is a 389-residue protein sequence, read N- to C-terminus: MINAKGRYLFSSESVTEGHPDKVADQISDGILDAILAQDPDAHVACETLVTTGLAFIAGEITTKAYADFPSIVRETVKEIGYNSSTMGFDWETCAVISSVDKQSVDIAQGVSRTKPEDQGAGDQGMMFGFACDETETLMPAPIYWAHKLSRRLTEVRKSGVLDFLRPDGKTQVAVEYVDGKPVRIDNVVVASQHAENISHADLCDAVKKEVIFHTLPESLVDKNTKIYINTTGRFVIGGPMGDCGLTGRKIIQDTYGGMGNHGGGAFSGKDPSKVDRSGAYMARYVAKNMVASGACKRCEVQIAYCIGVAEPLSVLVTSMGSSDIPDEALTKAVREVFDLRPYYISKRLDLKRPIYKPTSCYGHFGREQAGFTWEVTDAAADLRTALKI.

Residue His19 participates in ATP binding. Residue Asp21 coordinates Mg(2+). Glu47 is a binding site for K(+). L-methionine contacts are provided by Glu60 and Gln103. The interval 103–113 is flexible loop; the sequence is QSVDIAQGVSR. ATP-binding positions include 168 to 170, 234 to 235, Asp243, 249 to 250, Ala266, and Lys270; these read DGK, RF, and RK. Asp243 contributes to the L-methionine binding site. Lys274 provides a ligand contact to L-methionine.

Belongs to the AdoMet synthase family. Homotetramer; dimer of dimers. It depends on Mg(2+) as a cofactor. K(+) serves as cofactor.

Its subcellular location is the cytoplasm. The enzyme catalyses L-methionine + ATP + H2O = S-adenosyl-L-methionine + phosphate + diphosphate. Its pathway is amino-acid biosynthesis; S-adenosyl-L-methionine biosynthesis; S-adenosyl-L-methionine from L-methionine: step 1/1. In terms of biological role, catalyzes the formation of S-adenosylmethionine (AdoMet) from methionine and ATP. The overall synthetic reaction is composed of two sequential steps, AdoMet formation and the subsequent tripolyphosphate hydrolysis which occurs prior to release of AdoMet from the enzyme. In Solidesulfovibrio magneticus (strain ATCC 700980 / DSM 13731 / RS-1) (Desulfovibrio magneticus), this protein is S-adenosylmethionine synthase.